The sequence spans 382 residues: Alkaline serine protease ver112 (382 aa).

The N-terminal stretch at 1–15 is a signal peptide; sequence MRLSIIAAVLPLALA. Positions 16-102 are excised as a propeptide; that stretch reads APVAEPEIAP…IEQDAIFSIN (87 aa). Residues 56 to 99 form the Inhibitor I9 domain; the sequence is SKIPGIERVYENVLNGFSATLSNEELERLRRDPDVESIEQDAIF. Residues 111-382 enclose the Peptidase S8 domain; it reads TWGLTRISHR…VNYLAFNGAT (272 aa). 2 cysteine pairs are disulfide-bonded: C138–C227 and C282–C353. Active-site charge relay system residues include D143, H173, and S328.

The protein belongs to the peptidase S8 family.

It is found in the secreted. With respect to regulation, inhibited by phenylmethylsulfonyl fluoride (PMSF). Functionally, serine protease which can degrade the nematode cuticle. This Corniculantispora psalliotae (Lecanicillium psalliotae) protein is Alkaline serine protease ver112.